Here is a 414-residue protein sequence, read N- to C-terminus: Gamma-glutamyl phosphate reductase (414 aa).

The protein belongs to the gamma-glutamyl phosphate reductase family.

It localises to the cytoplasm. The enzyme catalyses L-glutamate 5-semialdehyde + phosphate + NADP(+) = L-glutamyl 5-phosphate + NADPH + H(+). It participates in amino-acid biosynthesis; L-proline biosynthesis; L-glutamate 5-semialdehyde from L-glutamate: step 2/2. Catalyzes the NADPH-dependent reduction of L-glutamate 5-phosphate into L-glutamate 5-semialdehyde and phosphate. The product spontaneously undergoes cyclization to form 1-pyrroline-5-carboxylate. The protein is Gamma-glutamyl phosphate reductase of Caldanaerobacter subterraneus subsp. tengcongensis (strain DSM 15242 / JCM 11007 / NBRC 100824 / MB4) (Thermoanaerobacter tengcongensis).